The chain runs to 406 residues: Formate-dependent phosphoribosylglycinamide formyltransferase (406 aa).

Residues 27–28 (EL) and Glu-87 each bind N(1)-(5-phospho-beta-D-ribosyl)glycinamide. ATP is bound by residues Arg-120, Lys-162, 167-172 (SSGKGQ), 202-205 (EGFI), and Glu-210. The 196-residue stretch at 125-320 (RLAAETLGLP…EFELHARALL (196 aa)) folds into the ATP-grasp domain. 2 residues coordinate Mg(2+): Glu-279 and Glu-291. N(1)-(5-phospho-beta-D-ribosyl)glycinamide contacts are provided by residues Asp-298, Lys-367, and 374 to 375 (RR).

This sequence belongs to the PurK/PurT family. Homodimer.

The catalysed reaction is N(1)-(5-phospho-beta-D-ribosyl)glycinamide + formate + ATP = N(2)-formyl-N(1)-(5-phospho-beta-D-ribosyl)glycinamide + ADP + phosphate + H(+). The protein operates within purine metabolism; IMP biosynthesis via de novo pathway; N(2)-formyl-N(1)-(5-phospho-D-ribosyl)glycinamide from N(1)-(5-phospho-D-ribosyl)glycinamide (formate route): step 1/1. Functionally, involved in the de novo purine biosynthesis. Catalyzes the transfer of formate to 5-phospho-ribosyl-glycinamide (GAR), producing 5-phospho-ribosyl-N-formylglycinamide (FGAR). Formate is provided by PurU via hydrolysis of 10-formyl-tetrahydrofolate. The protein is Formate-dependent phosphoribosylglycinamide formyltransferase of Bordetella bronchiseptica (strain ATCC BAA-588 / NCTC 13252 / RB50) (Alcaligenes bronchisepticus).